The following is a 521-amino-acid chain: Solute carrier family 35 member F4 (521 aa).

10 helical membrane-spanning segments follow: residues 160-180 (MVLK…SWVG), 192-212 (FYCP…FFPV), 248-266 (FLKR…NYLY), 277-297 (DVSA…WIVL), 301-321 (FMGV…MMAY), 330-350 (IIGV…KVLF), 365-385 (FVST…VILY), 395-417 (FAAL…NILV), 419-441 (VGVV…PGNA), and 450-470 (VIFN…FLLM). One can recognise an EamA domain in the interval 261–321 (LTNYLYLLAL…AITGIVMMAY (61 aa)).

The protein belongs to the SLC35F solute transporter family.

The protein localises to the membrane. Functionally, putative solute transporter. The sequence is that of Solute carrier family 35 member F4 (SLC35F4) from Homo sapiens (Human).